A 193-amino-acid polypeptide reads, in one-letter code: Rho-related GTP-binding protein RhoA-C (193 aa).

Residues 12–19 (GDGACGKT), 30–37 (FPEVYVPT), 59–63 (DTAGQ), 117–120 (NKKD), and 160–162 (SAK) contribute to the GTP site. (Microbial infection) O-linked (GlcNAc) tyrosine; by Yersinia Afp18 glycosylation occurs at Tyr34. The residue at position 190 (Cys190) is a Cysteine methyl ester. Residue Cys190 is the site of S-geranylgeranyl cysteine attachment. A propeptide spans 191 to 193 (LLL) (removed in mature form).

Belongs to the small GTPase superfamily. Rho family. (Microbial infection) Glycosylated at Tyr-34 by Yersinia ruckeri toxin Afp18. Mono-O-GlcNAcylation by Afp18 inhibits RhoA activation by guanine nucleotide exchange factors and blocks RhoA signaling.

The protein localises to the cell membrane. Functionally, regulates a signal transduction pathway linking plasma membrane receptors to the assembly of focal adhesions and actin stress fibers. This Danio rerio (Zebrafish) protein is Rho-related GTP-binding protein RhoA-C.